We begin with the raw amino-acid sequence, 689 residues long: Pentatricopeptide repeat-containing protein At1g71460, chloroplastic (689 aa).

The transit peptide at 1-49 (MEVVSSLGIRDLPASLSVTTSLNHRPHRSDKDGAPAKSPIRPSRTRRPS) directs the protein to the chloroplast. Residues 16-68 (LSVTTSLNHRPHRSDKDGAPAKSPIRPSRTRRPSTSPAKKPKPFRERDAFPSS) are disordered. The segment covering 38–52 (SPIRPSRTRRPSTSP) has biased composition (low complexity). PPR repeat units lie at residues 75–109 (NPYI…GIPV), 110–144 (NATT…GLES), 145–175 (NEFL…STSS), 176–212 (NVYS…GVDL), 213–247 (NVYS…GLFN), 248–282 (SVFL…DIVV), 283–309 (WGAM…MISE), 315–350 (NSVI…NYVE), 351–381 (QPFV…SKQR), 382–416 (NAIS…GFRP), 417–451 (DVVT…LFLP), 452–482 (NVSL…LEQR), 483–517 (NVKA…KHRP), 518–552 (DSVT…EFES), 553–583 (IPFV…VAVK), 584–618 (GSLT…GFTP), 619–649 (NTFT…MLRM), and 655–689 (SEEH…SLQT).

It belongs to the PPR family. PCMP-A subfamily.

It localises to the plastid. The protein resides in the chloroplast. The sequence is that of Pentatricopeptide repeat-containing protein At1g71460, chloroplastic (PCMP-A3) from Arabidopsis thaliana (Mouse-ear cress).